A 70-amino-acid chain; its full sequence is Large ribosomal subunit protein bL31 (70 aa).

Zn(2+) contacts are provided by Cys16, Cys18, Cys37, and Cys40.

It belongs to the bacterial ribosomal protein bL31 family. Type A subfamily. Part of the 50S ribosomal subunit. Requires Zn(2+) as cofactor.

Its function is as follows. Binds the 23S rRNA. In Desulfovibrio desulfuricans (strain ATCC 27774 / DSM 6949 / MB), this protein is Large ribosomal subunit protein bL31.